A 448-amino-acid polypeptide reads, in one-letter code: Mitochondrial distribution and morphology protein 10 (448 aa).

Belongs to the MDM10 family. Component of the ER-mitochondria encounter structure (ERMES) or MDM complex, composed of MMM1, MDM10, MDM12 and MDM34. Associates with the mitochondrial outer membrane sorting assembly machinery SAM(core) complex.

The protein resides in the mitochondrion outer membrane. Functionally, component of the ERMES/MDM complex, which serves as a molecular tether to connect the endoplasmic reticulum and mitochondria. Components of this complex are involved in the control of mitochondrial shape and protein biogenesis and may function in phospholipid exchange. MDM10 is involved in the late assembly steps of the general translocase of the mitochondrial outer membrane (TOM complex). Functions in the TOM40-specific route of the assembly of outer membrane beta-barrel proteins, including the association of TOM40 with the receptor TOM22 and small TOM proteins. Can associate with the SAM(core) complex as well as the MDM12-MMM1 complex, both involved in late steps of the major beta-barrel assembly pathway, that is responsible for biogenesis of all outer membrane beta-barrel proteins. May act as a switch that shuttles between both complexes and channels precursor proteins into the TOM40-specific pathway. Plays a role in mitochondrial morphology and in the inheritance of mitochondria. The sequence is that of Mitochondrial distribution and morphology protein 10 from Podospora anserina (strain S / ATCC MYA-4624 / DSM 980 / FGSC 10383) (Pleurage anserina).